The primary structure comprises 135 residues: MVLDSVARIVKVQLPAYLKQLPVPDSITGFARLTVSDWLRLLPFLGVLALLGYLAVRPFFPKKKQQKDSLINLKIQKENPKVVNEINIEDLCLTKAAYCRCWRSKTFPACDGSHNKHNELTGDNVGPLILKKKEV.

Residues 1 to 37 (MVLDSVARIVKVQLPAYLKQLPVPDSITGFARLTVSD) are Lumenal-facing. Residues 38 to 60 (WLRLLPFLGVLALLGYLAVRPFF) form a helical membrane-spanning segment. Residues 61–135 (PKKKQQKDSL…GPLILKKKEV (75 aa)) lie on the Cytoplasmic side of the membrane. [2Fe-2S] cluster contacts are provided by Cys-99, Cys-101, Cys-110, and His-114.

It belongs to the CISD protein family. CISD2 subfamily. In terms of assembly, homodimer. Interacts with BCL2; the interaction is direct and disrupted by BIK interaction with BCL2. Interacts with BCL2L1. Interacts with ITPR1. [2Fe-2S] cluster serves as cofactor. In terms of tissue distribution, brain.

Its subcellular location is the endoplasmic reticulum membrane. It is found in the mitochondrion outer membrane. Regulator of autophagy that contributes to antagonize BECN1-mediated cellular autophagy at the endoplasmic reticulum. Participates in the interaction of BCL2 with BECN1 and is required for BCL2-mediated depression of endoplasmic reticulum Ca(2+) stores during autophagy. Contributes to BIK-initiated autophagy, while it is not involved in BIK-dependent activation of caspases. Involved in life span control, probably via its function as regulator of autophagy. In Mus musculus (Mouse), this protein is CDGSH iron-sulfur domain-containing protein 2 (Cisd2).